A 356-amino-acid polypeptide reads, in one-letter code: Phospho-N-acetylmuramoyl-pentapeptide-transferase (356 aa).

Helical transmembrane passes span 27–47 (ATLM…INML), 73–93 (TMGG…WMDL), 97–117 (FVWA…LDDL), 138–158 (FLVA…WLYV), 165–185 (AIPL…GAGN), 195–215 (GLAI…AYLA), 232–252 (AGEL…FLWF), 258–278 (AVFM…AIAV), 284–304 (IVLA…IIQV), and 333–353 (KVVI…LATL).

Belongs to the glycosyltransferase 4 family. MraY subfamily. The cofactor is Mg(2+).

The protein localises to the cell inner membrane. It carries out the reaction UDP-N-acetyl-alpha-D-muramoyl-L-alanyl-gamma-D-glutamyl-meso-2,6-diaminopimeloyl-D-alanyl-D-alanine + di-trans,octa-cis-undecaprenyl phosphate = di-trans,octa-cis-undecaprenyl diphospho-N-acetyl-alpha-D-muramoyl-L-alanyl-D-glutamyl-meso-2,6-diaminopimeloyl-D-alanyl-D-alanine + UMP. The protein operates within cell wall biogenesis; peptidoglycan biosynthesis. Its function is as follows. Catalyzes the initial step of the lipid cycle reactions in the biosynthesis of the cell wall peptidoglycan: transfers peptidoglycan precursor phospho-MurNAc-pentapeptide from UDP-MurNAc-pentapeptide onto the lipid carrier undecaprenyl phosphate, yielding undecaprenyl-pyrophosphoryl-MurNAc-pentapeptide, known as lipid I. The polypeptide is Phospho-N-acetylmuramoyl-pentapeptide-transferase (Erythrobacter litoralis (strain HTCC2594)).